The sequence spans 1005 residues: Helicase-like transcription factor (1005 aa).

At Arg-27 the chain carries Omega-N-methylarginine. The DNA-binding element occupies 38–287 (EFQDIIPPDD…FSEKDQPENV (250 aa)). Lys-112 is covalently cross-linked (Glycyl lysine isopeptide (Lys-Gly) (interchain with G-Cter in SUMO2)). At Tyr-195 the chain carries Phosphotyrosine; by JAK2. Lys-211 is covalently cross-linked (Glycyl lysine isopeptide (Lys-Gly) (interchain with G-Cter in SUMO2)). 294 to 301 (DDMGLGKT) is an ATP binding site. The segment covering 325-361 (KNQVKKECNSSESDKPGRKDTIKKTDGLSKEGSRYSE) has biased composition (basic and acidic residues). Residues 325 to 385 (KNQVKKECNS…SELSSSQPKR (61 aa)) are disordered. The segment covering 373 to 382 (YSMSELSSSQ) has biased composition (polar residues). Phosphoserine is present on residues Ser-395, Ser-396, and Ser-398. Residues 427 to 603 (GPSKIKEDTA…WSLLSFLKLK (177 aa)) form the Helicase ATP-binding domain. A DEGH box motif is present at residues 554 to 557 (DEGH). Thr-733 carries the post-translational modification Phosphothreonine. An RING-type zinc finger spans residues 757-798 (CAICLDSLTVPVITHCAHVFCKPCICQCIQNEQPHAKCPLCR). Required for interaction with the RFBP isoform of ATP11B regions lie at residues 767–772 (PVITHC) and 791–796 (HAKCPL). Residues 834–999 (ALMHALIDLR…EMKQAKINEI (166 aa)) form the Helicase C-terminal domain. The interaction with SP1 and SP3 stretch occupies residues 922–1005 (SRVFLMDPAW…INEIRTLIDL (84 aa)).

This sequence belongs to the SNF2/RAD54 helicase family. RAD16 subfamily. Interacts with SP1 and SP3 independently of DNA; the interaction with these transcriptional factors may be required for basal transcription of target genes. Interacts (via the RING-finger) with isoform RFBP of ATP11B. Progesterone-dependent isoform 1 interacts with EGR1; the interaction requires prior binding to DNA and represses c-Rel via a DNA looping mechanism. Interacts with GATA4. Interacts with PCNA; the interaction promotes polyubiquitination of PCNA through association with the UBE2B-RAD18 and UBE2V2-UBE2N ubiquitin ligase complexes. Interacts with RAD18, SHPRH, UBE2V2 and UBE2N. Phosphorylated on serine, threonine, and tyrosine residues. Tyr-195 phosphorylation is catalyzed by JAK2 in response to prolactin treatment. It is required for DNA binding. As to expression, isoform 1 is expressed preferentially in bladder, cervix, diaphragm, duodenum, epididymis, heart, kidney, liver, lung, ovary (granulosa cells), prostate, spleen, testis (predominantly in the Sertoli cells of the seminiferous tubules) and vagina. Isoform 2 is expressed preferentially in lactating mammary gland and uterine endometrium.

It localises to the cytoplasm. The protein resides in the nucleus. It is found in the nucleolus. The protein localises to the nucleoplasm. The enzyme catalyses S-ubiquitinyl-[E2 ubiquitin-conjugating enzyme]-L-cysteine + [acceptor protein]-L-lysine = [E2 ubiquitin-conjugating enzyme]-L-cysteine + N(6)-ubiquitinyl-[acceptor protein]-L-lysine.. It functions in the pathway protein modification; protein ubiquitination. Functionally, has both helicase and E3 ubiquitin ligase activities. Possesses intrinsic ATP-dependent nucleosome-remodeling activity. This activity may be required for transcriptional activation or repression of specific target promoters. These may include the SERPINE1, to which this protein can bind directly. Mediates repression by c-Rel through a DNA-looping mechanism. Plays a role in error-free postreplication repair (PRR) of damaged DNA and maintains genomic stability through acting as a ubiquitin ligase for 'Lys-63'-linked polyubiquitination of chromatin-bound PCNA. Transcriptional regulator that mediates the ability of prolactin to augment progesterone-dependent transcription of the SCGB1A1/uteroglobin gene through a bipartite progesterone receptor half-site/overlapping Y-box combination (-38/-26) where progesterone activation is attenuated by nuclear factor Y binding. Regulation also involves two GC-rich sequences in the proximal promoter (positions -162/+90) and a RUSH/SMARCA3 site (positions -616/-611) in the 5'-untranslated region. This is Helicase-like transcription factor (HLTF) from Oryctolagus cuniculus (Rabbit).